Reading from the N-terminus, the 553-residue chain is Serine/threonine-protein phosphatase 2B catalytic subunit A1 (553 aa).

At Ser2 the chain carries N-acetylserine. Positions 119, 121, and 147 each coordinate Fe cation. Zn(2+) contacts are provided by Asp147 and Asn179. Residue His180 is the Proton donor of the active site. His228 and His317 together coordinate Zn(2+). Residues 413–447 form a disordered region; the sequence is LDPESEPKAAEETVKARANATKETGTPSDEKASSA. The segment covering 417–427 has biased composition (basic and acidic residues); sequence SEPKAAEETVK.

The protein belongs to the PPP phosphatase family. PP-2B subfamily. In terms of assembly, composed of two components (A and B), the A component is the catalytic subunit and the B component confers calcium sensitivity. Fe(3+) is required as a cofactor. Requires Zn(2+) as cofactor.

The enzyme catalyses O-phospho-L-seryl-[protein] + H2O = L-seryl-[protein] + phosphate. The catalysed reaction is O-phospho-L-threonyl-[protein] + H2O = L-threonyl-[protein] + phosphate. Calcium-dependent, calmodulin-stimulated protein phosphatase. This subunit may have a role in the calmodulin activation of calcineurin. The sequence is that of Serine/threonine-protein phosphatase 2B catalytic subunit A1 (CNA1) from Saccharomyces cerevisiae (strain ATCC 204508 / S288c) (Baker's yeast).